The primary structure comprises 459 residues: Bifunctional protein GlmU (459 aa).

The interval 1–229 (MTNYAIILAA…FDESLGVNDR (229 aa)) is pyrophosphorylase. Residues 8-11 (LAAG), Lys-22, Gln-72, and 77-78 (GT) each bind UDP-N-acetyl-alpha-D-glucosamine. Asp-102 contributes to the Mg(2+) binding site. UDP-N-acetyl-alpha-D-glucosamine contacts are provided by Gly-139, Glu-154, Asn-169, and Asn-227. Position 227 (Asn-227) interacts with Mg(2+). The linker stretch occupies residues 230–250 (VALAKAEKVMRRRINHAHMVN). Positions 251–459 (GVTLTNPAST…KKKPHHPNNK (209 aa)) are N-acetyltransferase. UDP-N-acetyl-alpha-D-glucosamine-binding residues include Arg-332 and Lys-350. His-362 (proton acceptor) is an active-site residue. Residues Tyr-365 and Asn-376 each coordinate UDP-N-acetyl-alpha-D-glucosamine. Acetyl-CoA contacts are provided by residues Ala-379, 385–386 (NY), Ser-404, Ala-422, and Arg-439.

In the N-terminal section; belongs to the N-acetylglucosamine-1-phosphate uridyltransferase family. This sequence in the C-terminal section; belongs to the transferase hexapeptide repeat family. Homotrimer. Mg(2+) is required as a cofactor.

Its subcellular location is the cytoplasm. The catalysed reaction is alpha-D-glucosamine 1-phosphate + acetyl-CoA = N-acetyl-alpha-D-glucosamine 1-phosphate + CoA + H(+). It catalyses the reaction N-acetyl-alpha-D-glucosamine 1-phosphate + UTP + H(+) = UDP-N-acetyl-alpha-D-glucosamine + diphosphate. It functions in the pathway nucleotide-sugar biosynthesis; UDP-N-acetyl-alpha-D-glucosamine biosynthesis; N-acetyl-alpha-D-glucosamine 1-phosphate from alpha-D-glucosamine 6-phosphate (route II): step 2/2. It participates in nucleotide-sugar biosynthesis; UDP-N-acetyl-alpha-D-glucosamine biosynthesis; UDP-N-acetyl-alpha-D-glucosamine from N-acetyl-alpha-D-glucosamine 1-phosphate: step 1/1. The protein operates within bacterial outer membrane biogenesis; LPS lipid A biosynthesis. Its function is as follows. Catalyzes the last two sequential reactions in the de novo biosynthetic pathway for UDP-N-acetylglucosamine (UDP-GlcNAc). The C-terminal domain catalyzes the transfer of acetyl group from acetyl coenzyme A to glucosamine-1-phosphate (GlcN-1-P) to produce N-acetylglucosamine-1-phosphate (GlcNAc-1-P), which is converted into UDP-GlcNAc by the transfer of uridine 5-monophosphate (from uridine 5-triphosphate), a reaction catalyzed by the N-terminal domain. This Streptococcus mutans serotype c (strain ATCC 700610 / UA159) protein is Bifunctional protein GlmU.